We begin with the raw amino-acid sequence, 325 residues long: Beta-ketoacyl-[acyl-carrier-protein] synthase III (325 aa).

Residues C112 and H250 contribute to the active site. The tract at residues 251–255 (QANSR) is ACP-binding. Residue N280 is part of the active site.

It belongs to the thiolase-like superfamily. FabH family. In terms of assembly, homodimer.

It localises to the cytoplasm. The catalysed reaction is malonyl-[ACP] + acetyl-CoA + H(+) = 3-oxobutanoyl-[ACP] + CO2 + CoA. Its pathway is lipid metabolism; fatty acid biosynthesis. Catalyzes the condensation reaction of fatty acid synthesis by the addition to an acyl acceptor of two carbons from malonyl-ACP. Catalyzes the first condensation reaction which initiates fatty acid synthesis and may therefore play a role in governing the total rate of fatty acid production. Possesses both acetoacetyl-ACP synthase and acetyl transacylase activities. Its substrate specificity determines the biosynthesis of branched-chain and/or straight-chain of fatty acids. The protein is Beta-ketoacyl-[acyl-carrier-protein] synthase III of Lactococcus lactis subsp. lactis (strain IL1403) (Streptococcus lactis).